Here is a 226-residue protein sequence, read N- to C-terminus: Gap junction beta-2 protein (226 aa).

The stretch at 2-13 (DWGTLQTILGGV) is an intramembrane region. The Cytoplasmic portion of the chain corresponds to 14-20 (NKHSTSI). The chain crosses the membrane as a helical span at residues 21–40 (GKIWLTVLFIFRIMILVVAA). The Extracellular segment spans residues 41–73 (KEVWGDEQADFVCNTLQPGCKNVCYDHYFPISH). Residues Glu-42, Gly-45, and Glu-47 each coordinate Ca(2+). 3 cysteine pairs are disulfide-bonded: Cys-53-Cys-180, Cys-60-Cys-174, and Cys-64-Cys-169. A helical transmembrane segment spans residues 74–94 (IRLWALQLIFVSTPALLVAMH). At 95–135 (VAYRRHEKKRKFIKGEIKSEFKDIEEIKTQKVRIEGSLWWT) the chain is on the cytoplasmic side. The helical transmembrane segment at 136–156 (YTSSIFFRVIFEAAFMYVFYV) threads the bilayer. Residues 157–189 (MYDGFSMQRLVKCNAWPCPNTVDCFVSRPTEKT) are Extracellular-facing. A helical transmembrane segment spans residues 190-210 (VFTVFMIAVSGICILLNVTEL). Topologically, residues 211–226 (CYLLIRYCSGKSKKPV) are cytoplasmic.

The protein belongs to the connexin family. Beta-type (group I) subfamily. In terms of assembly, a hemichannel or connexon is composed of a hexamer of connexins. A functional gap junction is formed by the apposition of two hemichannels. Forms heteromeric channels with GJB4. Interacts with CNST.

The protein localises to the cell membrane. Its subcellular location is the cell junction. It localises to the gap junction. Its function is as follows. Structural component of gap junctions. Gap junctions are dodecameric channels that connect the cytoplasm of adjoining cells. They are formed by the docking of two hexameric hemichannels, one from each cell membrane. Small molecules and ions diffuse from one cell to a neighboring cell via the central pore. The protein is Gap junction beta-2 protein (GJB2) of Gorilla gorilla gorilla (Western lowland gorilla).